A 146-amino-acid polypeptide reads, in one-letter code: Cytochrome c-type biogenesis protein CcmE (146 aa).

The Cytoplasmic portion of the chain corresponds to 1-8 (MNPRRKKR). Residues 9–29 (LGLILALVLGASATVGLMLYA) traverse the membrane as a helical; Signal-anchor for type II membrane protein segment. Residues 30–146 (LNQNMDLFYT…EVAEAMKKTH (117 aa)) are Periplasmic-facing. Heme is bound by residues His-129 and Tyr-133.

The protein belongs to the CcmE/CycJ family.

It is found in the cell inner membrane. Heme chaperone required for the biogenesis of c-type cytochromes. Transiently binds heme delivered by CcmC and transfers the heme to apo-cytochromes in a process facilitated by CcmF and CcmH. In Aliivibrio salmonicida (strain LFI1238) (Vibrio salmonicida (strain LFI1238)), this protein is Cytochrome c-type biogenesis protein CcmE.